The following is a 207-amino-acid chain: Guanylate kinase (207 aa).

In terms of domain architecture, Guanylate kinase-like spans 5–184; the sequence is GNLFIVSAPS…ALADLVAIIR (180 aa). ATP is bound at residue 12–19; sequence APSGAGKS.

It belongs to the guanylate kinase family.

The protein localises to the cytoplasm. It carries out the reaction GMP + ATP = GDP + ADP. Its function is as follows. Essential for recycling GMP and indirectly, cGMP. The sequence is that of Guanylate kinase from Shewanella violacea (strain JCM 10179 / CIP 106290 / LMG 19151 / DSS12).